We begin with the raw amino-acid sequence, 269 residues long: Protein tio (269 aa).

Over residues 1-12 (MANEPQEHEEGK) the composition is skewed to basic and acidic residues. The segment at 1–127 (MANEPQEHEE…NETKCPDEQN (127 aa)) is disordered. The Cytoplasmic segment spans residues 1-246 (MANEPQEHEE…VEKKLTCVIC (246 aa)). Positions 27–41 (PNIPQDPTPGTPPGP) are enriched in pro residues. Positions 61–74 (SEGPPDGSGNSSPP) are enriched in low complexity. Polar residues-rich tracts occupy residues 91–101 (SESGGNNSAPN) and 114–127 (AGNG…DEQN). Residue Tyr-136 is modified to Phosphotyrosine; by host LCK. The segment at 158-167 (EEERSPFNKY) is CSKH/LBD2. The segment at 186-195 (IPPPQLPPRP) is SH3B/LBD1. The helical transmembrane segment at 247–267 (LLIGILVLLILLFMLGFLFLL) threads the bilayer. The Extracellular portion of the chain corresponds to 268-269 (MK).

In terms of assembly, homodimer. Binds SH3 domain of host LYN, HCK, LCK, SRC, FYN or YES. When tyrosine-phosphorylated, binds to the SH2 domain of host LCK, SRC, or FYN. In terms of processing, phosphorylated by host LCK, SRC and less efficiently by FYN.

The protein localises to the host cell membrane. Its function is as follows. Transforms host T-cells, inducing T-cell lymphomia in the host. Activates at least SRC and LCK tyrosines kinases, thereby activating signaling pathway transforming host T-cells. Human T-cells transformed ex vivo display a IL2 indenpendent growth phenotype. This Ateles (AtHV-3) protein is Protein tio.